Reading from the N-terminus, the 557-residue chain is Dihydroxy-acid dehydratase (557 aa).

Residue Asp78 participates in Mg(2+) binding. A [2Fe-2S] cluster-binding site is contributed by Cys119. Residues Asp120 and Lys121 each contribute to the Mg(2+) site. Lys121 is modified (N6-carboxylysine). Position 192 (Cys192) interacts with [2Fe-2S] cluster. Glu442 is a Mg(2+) binding site. Ser468 functions as the Proton acceptor in the catalytic mechanism.

It belongs to the IlvD/Edd family. As to quaternary structure, homodimer. [2Fe-2S] cluster is required as a cofactor. It depends on Mg(2+) as a cofactor.

It carries out the reaction (2R)-2,3-dihydroxy-3-methylbutanoate = 3-methyl-2-oxobutanoate + H2O. It catalyses the reaction (2R,3R)-2,3-dihydroxy-3-methylpentanoate = (S)-3-methyl-2-oxopentanoate + H2O. It participates in amino-acid biosynthesis; L-isoleucine biosynthesis; L-isoleucine from 2-oxobutanoate: step 3/4. The protein operates within amino-acid biosynthesis; L-valine biosynthesis; L-valine from pyruvate: step 3/4. Functions in the biosynthesis of branched-chain amino acids. Catalyzes the dehydration of (2R,3R)-2,3-dihydroxy-3-methylpentanoate (2,3-dihydroxy-3-methylvalerate) into 2-oxo-3-methylpentanoate (2-oxo-3-methylvalerate) and of (2R)-2,3-dihydroxy-3-methylbutanoate (2,3-dihydroxyisovalerate) into 2-oxo-3-methylbutanoate (2-oxoisovalerate), the penultimate precursor to L-isoleucine and L-valine, respectively. This Bacillus cereus (strain ATCC 10987 / NRS 248) protein is Dihydroxy-acid dehydratase.